Consider the following 502-residue polypeptide: ATP synthase subunit alpha (502 aa).

G169–T176 contacts ATP.

Belongs to the ATPase alpha/beta chains family. F-type ATPases have 2 components, CF(1) - the catalytic core - and CF(0) - the membrane proton channel. CF(1) has five subunits: alpha(3), beta(3), gamma(1), delta(1), epsilon(1). CF(0) has three main subunits: a(1), b(2) and c(9-12). The alpha and beta chains form an alternating ring which encloses part of the gamma chain. CF(1) is attached to CF(0) by a central stalk formed by the gamma and epsilon chains, while a peripheral stalk is formed by the delta and b chains.

The protein localises to the cell membrane. The catalysed reaction is ATP + H2O + 4 H(+)(in) = ADP + phosphate + 5 H(+)(out). Its function is as follows. Produces ATP from ADP in the presence of a proton gradient across the membrane. The alpha chain is a regulatory subunit. This chain is ATP synthase subunit alpha, found in Bacillus velezensis (strain DSM 23117 / BGSC 10A6 / LMG 26770 / FZB42) (Bacillus amyloliquefaciens subsp. plantarum).